We begin with the raw amino-acid sequence, 251 residues long: Large ribosomal subunit protein uL16m (251 aa).

The N-terminal 29 residues, 1 to 29 (MWRLLTRAPAPLWRMHFSDTWAALPTSAG), are a transit peptide targeting the mitochondrion.

The protein belongs to the universal ribosomal protein uL16 family. As to quaternary structure, component of the mitochondrial ribosome large subunit (39S) which comprises a 16S rRNA and about 50 distinct proteins.

It localises to the mitochondrion. The chain is Large ribosomal subunit protein uL16m (Mrpl16) from Rattus norvegicus (Rat).